The following is a 670-amino-acid chain: Sodium, potassium, lithium and rubidium/H(+) antiporter (670 aa).

The next 11 helical transmembrane spans lie at 5 to 27, 46 to 66, 83 to 103, 105 to 125, 156 to 176, 182 to 202, 228 to 248, 276 to 296, 314 to 334, 355 to 375, and 389 to 409; these read LVVL…IPFI, GLHF…PLLF, PILL…GYTI, WMIP…LSPT, ASGL…AFSL, SFVF…FLII, FVIY…VVAG, IILF…IPDV, YILV…LFFW, LLIS…FSIP, and LILF…TVVL.

Belongs to the monovalent cation:proton antiporter 1 (CPA1) transporter (TC 2.A.36) family. Nhak (TC 2.A.36.3.2) subfamily.

It localises to the cell membrane. Its function is as follows. Transporter involved in the efflux of sodium, potassium, lithium and rubidium. The chain is Sodium, potassium, lithium and rubidium/H(+) antiporter (nhaK) from Bacillus subtilis (strain 168).